The sequence spans 179 residues: MISRSLVMEYLTNPGALSLAAGVACGVCLGWGLRMRFGMLPKSSVRETNPDTETEASILGESGEYKMILVVRNDLKMGKGKVAAQCSHAAVSAYKQIQRRNPELLKEWEYCGQPKVVVKAPDEETLVELLTHAKVLGLTVSLIQDAGRTQIAPGSRTVLGIGPGPADLIDKVTGHLKLY.

The helical transmembrane segment at 10–32 (YLTNPGALSLAAGVACGVCLGWG) threads the bilayer. Glycyl lysine isopeptide (Lys-Gly) (interchain with G-Cter in ubiquitin) cross-links involve residues Lys-76, Lys-81, Lys-95, Lys-106, Lys-115, Lys-171, and Lys-177.

Belongs to the PTH2 family. Monomer. In terms of processing, ubiquitinated by PRKN during mitophagy, leading to its degradation and enhancement of mitophagy. Deubiquitinated by USP30.

It is found in the mitochondrion outer membrane. It carries out the reaction an N-acyl-L-alpha-aminoacyl-tRNA + H2O = an N-acyl-L-amino acid + a tRNA + H(+). Its function is as follows. Peptidyl-tRNA hydrolase which releases tRNAs from the ribosome during protein synthesis. Promotes caspase-independent apoptosis by regulating the function of two transcriptional regulators, AES and TLE1. The chain is Peptidyl-tRNA hydrolase 2, mitochondrial (PTRH2) from Bos taurus (Bovine).